Here is a 387-residue protein sequence, read N- to C-terminus: ATP phosphoribosyltransferase regulatory subunit (387 aa).

Belongs to the class-II aminoacyl-tRNA synthetase family. HisZ subfamily. Heteromultimer composed of HisG and HisZ subunits.

It is found in the cytoplasm. Its pathway is amino-acid biosynthesis; L-histidine biosynthesis; L-histidine from 5-phospho-alpha-D-ribose 1-diphosphate: step 1/9. In terms of biological role, required for the first step of histidine biosynthesis. May allow the feedback regulation of ATP phosphoribosyltransferase activity by histidine. The polypeptide is ATP phosphoribosyltransferase regulatory subunit (Ralstonia pickettii (strain 12J)).